The chain runs to 810 residues: RING finger protein unkempt homolog (810 aa).

The interval 1-24 (MSKGPGPGGSAASSAPPAATAQVL) is disordered. The span at 10–19 (SAASSAPPAA) shows a compositional bias: low complexity. 5 consecutive C3H1-type zinc fingers follow at residues 84 to 113 (YSPD…HRTT), 124 to 154 (YYKT…HGPH), 215 to 241 (NYKT…HNSK), 251 to 285 (KYRS…HTRT), and 293 to 321 (IYKS…HVEQ). Residues 239 to 265 (NSKDRRRSPRKHKYRSSPCPNVKHGDE) form a disordered region. At serine 240 the chain carries Phosphoserine. Over residues 241–253 (KDRRRSPRKHKYR) the composition is skewed to basic residues. The segment at 324–343 (LSDDLQPSSAVSSPTQPGPV) is disordered. Residues 328–338 (LQPSSAVSSPT) show a composition bias toward polar residues. 4 positions are modified to phosphoserine: serine 374, serine 378, serine 385, and serine 631. Residues 643–723 (GAAELARLRQ…QEELERLHAG (81 aa)) adopt a coiled-coil conformation. The RING-type; degenerate zinc finger occupies 766-801 (SVKCLKCQEQKRAVLPCQHAALCELCAEGSECPICQ).

This sequence belongs to the unkempt family.

The protein resides in the cytoplasm. Its function is as follows. Sequence-specific RNA-binding protein which plays an important role in the establishment and maintenance of the early morphology of cortical neurons during embryonic development. Acts as a translation repressor and controls a translationally regulated cell morphology program to ensure proper structuring of the nervous system. Translational control depends on recognition of its binding element within target mRNAs which consists of a mandatory UAG trimer upstream of a U/A-rich motif. Associated with polysomes. In Homo sapiens (Human), this protein is RING finger protein unkempt homolog (UNK).